Reading from the N-terminus, the 414-residue chain is ORC1-type DNA replication protein 11 (414 aa).

Residues 60-64, Tyr-207, and Arg-219 contribute to the ATP site; that span reads VGKTA.

The protein belongs to the CDC6/cdc18 family.

Involved in regulation of DNA replication. The protein is ORC1-type DNA replication protein 11 (cdc6k) of Haloarcula marismortui (strain ATCC 43049 / DSM 3752 / JCM 8966 / VKM B-1809) (Halobacterium marismortui).